Reading from the N-terminus, the 303-residue chain is Foldase protein PrsA (303 aa).

A signal peptide spans 1 to 20 (MMKKWLLAAASLLMVVTLAG). The N-palmitoyl cysteine moiety is linked to residue Cys-21. The S-diacylglycerol cysteine moiety is linked to residue Cys-21. Residues 137 to 233 (EPKVEVQHIL…YGYHVIRMIK (97 aa)) enclose the PpiC domain.

Belongs to the PrsA family.

It localises to the cell membrane. It carries out the reaction [protein]-peptidylproline (omega=180) = [protein]-peptidylproline (omega=0). In terms of biological role, plays a major role in protein secretion by helping the post-translocational extracellular folding of several secreted proteins. The protein is Foldase protein PrsA of Latilactobacillus sakei subsp. sakei (strain 23K) (Lactobacillus sakei subsp. sakei).